Here is a 421-residue protein sequence, read N- to C-terminus: Nuclear envelope integral membrane protein 2 (421 aa).

Residues 1–22 (MPPGSWWLVLWLPPLATLPAGA) form the signal peptide. Helical transmembrane passes span 147 to 167 (NVVD…FFYA), 175 to 195 (VFYY…FVLL), 206 to 226 (TFGA…CQLM), 232 to 252 (LWCG…LCSF), and 279 to 299 (LVLV…MILL).

Belongs to the NEMP family.

The protein localises to the nucleus inner membrane. The sequence is that of Nuclear envelope integral membrane protein 2 (Nemp2) from Rattus norvegicus (Rat).